The sequence spans 282 residues: Homeobox protein vex1 (282 aa).

A DNA-binding region (homeobox) is located at residues A129–T188.

It is found in the nucleus. Transcriptional repressor. Acts in a ventral signaling pathway downstream of bmp4 to antagonize the Spemann organizer and ventrally pattern the embryonic mesoderm. Represses transcription of the dorsal genes gsc and otx2. This Xenopus tropicalis (Western clawed frog) protein is Homeobox protein vex1.